The chain runs to 327 residues: Zinc transport protein ZntB (327 aa).

Topologically, residues M1–M273 are cytoplasmic. A helical transmembrane segment spans residues A274 to I294. Over P295 to R300 the chain is Periplasmic. A helical transmembrane segment spans residues F301 to L321. Topologically, residues H322–L327 are cytoplasmic.

Belongs to the CorA metal ion transporter (MIT) (TC 1.A.35) family.

Its subcellular location is the cell inner membrane. It catalyses the reaction Zn(2+)(out) + H(+)(out) = Zn(2+)(in) + H(+)(in). Functionally, zinc transporter. Acts as a Zn(2+):proton symporter, which likely mediates zinc ion uptake. This Escherichia fergusonii (strain ATCC 35469 / DSM 13698 / CCUG 18766 / IAM 14443 / JCM 21226 / LMG 7866 / NBRC 102419 / NCTC 12128 / CDC 0568-73) protein is Zinc transport protein ZntB.